The primary structure comprises 67 residues: Putative sodium channel alpha-toxin Acra5 (67 aa).

The LCN-type CS-alpha/beta domain occupies 2 to 65 (RDGYIMIKDT…VYGDRGVICR (64 aa)). Disulfide bonds link Cys13-Cys64, Cys17-Cys40, Cys26-Cys45, and Cys30-Cys47. Residue Arg67 is a propeptide, removed by a carboxypeptidase.

Belongs to the long (4 C-C) scorpion toxin superfamily. Sodium channel inhibitor family. Alpha subfamily. In terms of tissue distribution, expressed by the venom gland.

Its subcellular location is the secreted. In terms of biological role, alpha toxins bind voltage-independently at site-3 of sodium channels (Nav) and inhibit the inactivation of the activated channels, thereby blocking neuronal transmission. This Androctonus crassicauda (Arabian fat-tailed scorpion) protein is Putative sodium channel alpha-toxin Acra5.